The primary structure comprises 203 residues: Lipoprotein MlpJ (203 aa).

Residues 1–17 (MKIINILFCISLLLLNS) form the signal peptide. The N-palmitoyl cysteine moiety is linked to residue C18. C18 is lipidated: S-diacylglycerol cysteine. A disordered region spans residues 26–47 (LKNNAQQTKSRKKRDLSQEELP).

It belongs to the Multicopy lipoprotein (Mlp) family.

The protein localises to the cell outer membrane. An outer membrane protein that may participate in pathogenesis. Some human Lyme disease patients have antibodies against this protein. The Mlp proteins probably undergo intragenic recombination, generating new alleles. In Borreliella burgdorferi (strain ATCC 35210 / DSM 4680 / CIP 102532 / B31) (Borrelia burgdorferi), this protein is Lipoprotein MlpJ.